The primary structure comprises 625 residues: Cytochrome c oxidase subunit 1 (625 aa).

A helical membrane pass occupies residues 23 to 43 (IAIMYLIAGTLFFVKAGVMAL). His-69 provides a ligand contact to Fe(II)-heme a. A run of 6 helical transmembrane segments spans residues 72-92 (IMLF…VIPL), 99-119 (VAFP…GLLL), 151-171 (FYVL…INFL), 195-215 (FISS…LALL), 240-260 (IFWI…FGII), and 272-292 (LFGY…GFMV). Residues His-246 and Tyr-250 each coordinate Cu cation. A cross-link (1'-histidyl-3'-tyrosine (His-Tyr)) is located at residues 246–250 (HPEVY). Residues His-295 and His-296 each contribute to the Cu cation site. 2 helical membrane-spanning segments follow: residues 309-329 (IFAV…FNWL) and 343-363 (MLFA…GVML). Residue His-381 coordinates heme a3. The next 5 membrane-spanning stretches (helical) occupy residues 382–402 (FHYI…FYWY), 417–437 (LFFW…HLLG), 460–480 (ISTI…INVI), 551–571 (SILP…LIML), and 577–597 (IINP…CMFV). His-383 is a binding site for Fe(II)-heme a.

The protein belongs to the heme-copper respiratory oxidase family.

It localises to the cell membrane. The catalysed reaction is 4 Fe(II)-[cytochrome c] + O2 + 8 H(+)(in) = 4 Fe(III)-[cytochrome c] + 2 H2O + 4 H(+)(out). It functions in the pathway energy metabolism; oxidative phosphorylation. Functionally, cytochrome c oxidase is the component of the respiratory chain that catalyzes the reduction of oxygen to water. Subunits 1-3 form the functional core of the enzyme complex. CO I is the catalytic subunit of the enzyme. Electrons originating in cytochrome c are transferred via the copper A center of subunit 2 and heme A of subunit 1 to the bimetallic center formed by heme A3 and copper B. The protein is Cytochrome c oxidase subunit 1 (ctaD) of Alkalihalophilus pseudofirmus (strain ATCC BAA-2126 / JCM 17055 / OF4) (Bacillus pseudofirmus).